A 1364-amino-acid polypeptide reads, in one-letter code: Outer kinetochore KNL1 complex subunit spc7 (1364 aa).

A compositionally biased stretch (polar residues) spans 1–15 (MPTSPRRNSIATTDN). 3 disordered regions span residues 1-36 (MPTSPRRNSIATTDNVIGRNKSRKRPHSLGGPGALQ), 124-190 (YPKD…DIAS), and 202-223 (EALNAGHPPPSLYPENDDLSIQ). Residues 124 to 136 (YPKDHQSDSEKST) show a composition bias toward basic and acidic residues. Over residues 157–169 (GPTTTSFSRNETQ) the composition is skewed to polar residues. Residues 170 to 181 (SSPHSHSASIIS) are compositionally biased toward low complexity. The short motif at 254 to 257 (MDLT) is the MELT; degenerate element. T257 is modified (phosphothreonine; by mph1). The tract at residues 289–334 (ASHDPSNQTQLSSPNKSSSPTSIEISDFSKNNENHDQSENKEEEED) is disordered. Over residues 300–310 (SSPNKSSSPTS) the composition is skewed to low complexity. Residues 318–328 (KNNENHDQSEN) are compositionally biased toward basic and acidic residues. Residues 450-453 (MDLT) carry the MELT; degenerate motif. T453 is subject to Phosphothreonine; by mph1. The tract at residues 456–503 (ISSTNAPTHLNEDDLNQFTSNISSSSKPRKDNNKTANSSKPIPDSEDF) is disordered. Residues 471-481 (NQFTSNISSSS) show a composition bias toward polar residues. An MELT; degenerate motif is present at residues 504–507 (MDIT). T507 is subject to Phosphothreonine; by mph1. Disordered regions lie at residues 564–643 (LPSA…SSFD) and 697–837 (GATP…GVSN). Basic and acidic residues predominate over residues 566–585 (SADKENAEREEIPSYSDKSE). Over residues 586–617 (NFNTTSFTNHERSPNGNNNLKFSKDPNSSSPS) the composition is skewed to polar residues. The span at 719–730 (EVSRQPTDDKGE) shows a compositional bias: basic and acidic residues. Positions 747-773 (LTIQQTNEIKHVPTNTTSSVKLPQQPS) are enriched in polar residues. Over residues 791 to 802 (SLERLESQEPNR) the composition is skewed to basic and acidic residues. Residues 808–820 (VGSSNAGNTTSVG) show a composition bias toward polar residues. A coiled-coil region spans residues 1075–1155 (LAQAQEKLEK…EEQLLNLKNE (81 aa)). Positions 1091–1105 (RRRRLLSEKEERRKE) match the Nuclear localization signal motif.

In terms of assembly, component of the KNL1/SPC105 complex composed of at least spc7 and sos7. Part of the outer kinetochore KMN network that includes the KNL1, MIS12 and NDC80 complexes. Interacts (via C-terminus) with sos7 (via C-terminus); the interaction is direct. Interacts (when phosphorylated on MELT motifs) with bub1 and bub3; to recruit the BUB1-BUB3 complex to the kinetochore. Post-translationally, phosphorylation of threonine residues in the MELT motifs by mph1/mps1 leads to recruitment of bub1 and bub3 to the kinetochore, and is required to maintain spindle assembly checkpoint signaling.

The protein localises to the nucleus. The protein resides in the chromosome. Its subcellular location is the centromere. It localises to the kinetochore. Acts as a component of the outer kinetochore KNL1 complex that serves as a docking point for spindle assembly checkpoint components and mediates microtubule-kinetochore interactions. Kinetochores, consisting of a centromere-associated inner segment and a microtubule-contacting outer segment, play a crucial role in chromosome segregation by mediating the physical connection between centromeric DNA and spindle microtubules. The outer kinetochore is made up of the ten-subunit KMN network, comprising the MIS12, NDC80 and KNL1 complexes, and auxiliary microtubule-associated components; together they connect the outer kinetochore with the inner kinetochore, bind microtubules, and mediate interactions with mitotic checkpoint proteins that delay anaphase until chromosomes are bioriented on the spindle. Recruits the BUB1-BUB3 complex to kinetochores when phosphorylated by mph1/mps1, to support spindle assembly checkpoint signaling. Functions both in mitotic and in meiotic chromosome segregation. This is Outer kinetochore KNL1 complex subunit spc7 from Schizosaccharomyces pombe (strain 972 / ATCC 24843) (Fission yeast).